Reading from the N-terminus, the 134-residue chain is Profilin-1 (134 aa).

A disulfide bridge links cysteine 13 with cysteine 118. An Involved in PIP2 interaction motif is present at residues 84–100 (AVIRGKKGSGGITTKKT). Threonine 114 carries the phosphothreonine modification.

Belongs to the profilin family. Occurs in many kinds of cells as a complex with monomeric actin in a 1:1 ratio. In terms of processing, phosphorylated by MAP kinases.

It localises to the cytoplasm. Its subcellular location is the cytoskeleton. Its function is as follows. Binds to actin and affects the structure of the cytoskeleton. At high concentrations, profilin prevents the polymerization of actin, whereas it enhances it at low concentrations. The polypeptide is Profilin-1 (Olea europaea (Common olive)).